A 402-amino-acid chain; its full sequence is Elongation factor Tu (402 aa).

Positions 10–212 (KPHINIGTIG…AVDEYIPEPK (203 aa)) constitute a tr-type G domain. Positions 19–26 (GHVDHGKT) are G1. Position 19–26 (19–26 (GHVDHGKT)) interacts with GTP. Thr-26 provides a ligand contact to Mg(2+). A G2 region spans residues 60–64 (GITIA). The segment at 81–84 (DCPG) is G3. GTP-binding positions include 81-85 (DCPGH) and 136-139 (NKED). Residues 136–139 (NKED) are G4. Residues 177–179 (SAF) form a G5 region.

It belongs to the TRAFAC class translation factor GTPase superfamily. Classic translation factor GTPase family. EF-Tu/EF-1A subfamily. Monomer.

The protein resides in the cytoplasm. It carries out the reaction GTP + H2O = GDP + phosphate + H(+). GTP hydrolase that promotes the GTP-dependent binding of aminoacyl-tRNA to the A-site of ribosomes during protein biosynthesis. The protein is Elongation factor Tu of Sulfurovum sp. (strain NBC37-1).